The chain runs to 355 residues: Peptide chain release factor 1 (355 aa).

An N5-methylglutamine modification is found at Q233.

Belongs to the prokaryotic/mitochondrial release factor family. Methylated by PrmC. Methylation increases the termination efficiency of RF1.

It is found in the cytoplasm. Its function is as follows. Peptide chain release factor 1 directs the termination of translation in response to the peptide chain termination codons UAG and UAA. This is Peptide chain release factor 1 from Clostridium tetani (strain Massachusetts / E88).